Reading from the N-terminus, the 141-residue chain is Putative pre-16S rRNA nuclease (141 aa).

Belongs to the YqgF nuclease family.

Its subcellular location is the cytoplasm. In terms of biological role, could be a nuclease involved in processing of the 5'-end of pre-16S rRNA. The polypeptide is Putative pre-16S rRNA nuclease (Sodalis glossinidius (strain morsitans)).